Reading from the N-terminus, the 440-residue chain is Nitrilase and fragile histidine triad fusion protein NitFhit (440 aa).

In terms of domain architecture, CN hydrolase spans 14–264 (RHFIAVCQMT…VDMCFAEIDL (251 aa)). Residues Glu54, Lys127, and Cys169 contribute to the active site. Residues 297 to 405 (GGLKFARFNI…LPRRAGDFGD (109 aa)) form the HIT domain. Residues 390 to 394 (HVHIH) carry the Histidine triad motif motif. His392 acts as the Tele-AMP-histidine intermediate in catalysis.

This sequence in the N-terminal section; belongs to the UPF0012 family. In terms of assembly, homotetramer. Mn(2+) serves as cofactor.

It carries out the reaction P(1),P(3)-bis(5'-adenosyl) triphosphate + H2O = AMP + ADP + 2 H(+). In terms of biological role, cleaves A-5'-PPP-5'A to yield AMP and ADP. The protein is Nitrilase and fragile histidine triad fusion protein NitFhit of Caenorhabditis elegans.